Consider the following 593-residue polypeptide: Proline dehydrogenase 1, mitochondrial (593 aa).

The interval 24–44 (PAAREQPAAGPGAEPVCGPAE) is disordered. An N6-acetyllysine mark is found at lysine 368 and lysine 479.

This sequence belongs to the proline oxidase family. Requires FAD as cofactor.

Its subcellular location is the mitochondrion matrix. It catalyses the reaction L-proline + a quinone = (S)-1-pyrroline-5-carboxylate + a quinol + H(+). It participates in amino-acid degradation; L-proline degradation into L-glutamate; L-glutamate from L-proline: step 1/2. Its function is as follows. Converts proline to delta-1-pyrroline-5-carboxylate. This chain is Proline dehydrogenase 1, mitochondrial, found in Bos taurus (Bovine).